We begin with the raw amino-acid sequence, 172 residues long: Nucleoside-triphosphatase THEP1 (172 aa).

ATP is bound by residues 11–18 (GKPGIGKT) and 101–108 (IILIDEIG).

Belongs to the THEP1 NTPase family.

It carries out the reaction a ribonucleoside 5'-triphosphate + H2O = a ribonucleoside 5'-diphosphate + phosphate + H(+). Has nucleotide phosphatase activity towards ATP, GTP, CTP, TTP and UTP. May hydrolyze nucleoside diphosphates with lower efficiency. The protein is Nucleoside-triphosphatase THEP1 of Sulfolobus acidocaldarius (strain ATCC 33909 / DSM 639 / JCM 8929 / NBRC 15157 / NCIMB 11770).